The following is a 125-amino-acid chain: Large ribosomal subunit protein bL12 (125 aa).

The protein belongs to the bacterial ribosomal protein bL12 family. As to quaternary structure, homodimer. Part of the ribosomal stalk of the 50S ribosomal subunit. Forms a multimeric L10(L12)X complex, where L10 forms an elongated spine to which 2 to 4 L12 dimers bind in a sequential fashion. Binds GTP-bound translation factors.

Its function is as follows. Forms part of the ribosomal stalk which helps the ribosome interact with GTP-bound translation factors. Is thus essential for accurate translation. This Dictyoglomus thermophilum (strain ATCC 35947 / DSM 3960 / H-6-12) protein is Large ribosomal subunit protein bL12.